A 95-amino-acid chain; its full sequence is Small ribosomal subunit protein bS6 (95 aa).

Belongs to the bacterial ribosomal protein bS6 family.

Binds together with bS18 to 16S ribosomal RNA. This chain is Small ribosomal subunit protein bS6, found in Corynebacterium urealyticum (strain ATCC 43042 / DSM 7109).